A 132-amino-acid polypeptide reads, in one-letter code: Large ribosomal subunit protein bL21 (132 aa).

The disordered stretch occupies residues 104 to 132; that stretch reads GKAPSIGPRPPREKKPVVETSAEADDAAA.

This sequence belongs to the bacterial ribosomal protein bL21 family. In terms of assembly, part of the 50S ribosomal subunit. Contacts protein L20.

Its function is as follows. This protein binds to 23S rRNA in the presence of protein L20. The protein is Large ribosomal subunit protein bL21 of Rhodopseudomonas palustris (strain BisB18).